Consider the following 79-residue polypeptide: Pulmonary surfactant-associated protein B (79 aa).

The 76-residue stretch at 4-79 (PLPFCWLCRT…VCGLVLRCSS (76 aa)) folds into the Saposin B-type domain. 3 cysteine pairs are disulfide-bonded: Cys8/Cys77, Cys11/Cys71, and Cys35/Cys46.

In terms of assembly, homodimer; disulfide-linked.

The protein resides in the secreted. It is found in the extracellular space. Its subcellular location is the surface film. Pulmonary surfactant-associated proteins promote alveolar stability by lowering the surface tension at the air-liquid interface in the peripheral air spaces. SP-B increases the collapse pressure of palmitic acid to nearly 70 millinewtons per meter. The chain is Pulmonary surfactant-associated protein B (SFTPB) from Sus scrofa (Pig).